A 206-amino-acid polypeptide reads, in one-letter code: RNA pyrophosphohydrolase (206 aa).

Residues 6 to 149 enclose the Nudix hydrolase domain; sequence GYRPNVGIVL…KRGVYARALR (144 aa). The Nudix box motif lies at 38–59; sequence GGMNTDETPVEAMYRELQEETG. A disordered region spans residues 175–206; that stretch reads MPGHTAGHDRPRKRPRTRGYWPKKATGDGPAS.

This sequence belongs to the Nudix hydrolase family. RppH subfamily. It depends on a divalent metal cation as a cofactor.

Accelerates the degradation of transcripts by removing pyrophosphate from the 5'-end of triphosphorylated RNA, leading to a more labile monophosphorylated state that can stimulate subsequent ribonuclease cleavage. The protein is RNA pyrophosphohydrolase of Stenotrophomonas maltophilia (strain K279a).